Consider the following 184-residue polypeptide: Photosystem I assembly protein Ycf4 (184 aa).

The next 2 membrane-spanning stretches (helical) occupy residues 22–42 (FCWAFILFLGSLGFLLVGTSS) and 57–77 (IIFFPQGIVMSFYGIAGLFIS).

This sequence belongs to the Ycf4 family.

It is found in the plastid. It localises to the chloroplast thylakoid membrane. Its function is as follows. Seems to be required for the assembly of the photosystem I complex. The protein is Photosystem I assembly protein Ycf4 of Olimarabidopsis pumila (Dwarf rocket).